The sequence spans 333 residues: MKLTALNSTVRRALLNGRNQNGNRLGSAALMPYAAAETRLLCAGGANGWFFYWKRTMVSPAEAKVPEKEKEKEKAKAEKSVVESSYWGISRPKVVREDGTEWPWNCFMPWESYRSNVSIDLTKHHVPKNVLDKVAYRTVKLLRIPTDLFFKRRYGCRAMMLETVAAVPGMVGGMLLHLRSLRKFQQSGGWIKALLEEAENERMHLMTMVELVKPKWYERLLVLAVQGVFFNAFFVLYILSPKVAHRIVGYLEEEAIHSYTEYLKDLESGAIENVPAPAIAIDYWRLPKDARLKDVITVIRADEAHHRDVNHFASDIHFQGKELREAPAPIGYH.

Residues 158 to 178 form a helical membrane-spanning segment; that stretch reads AMMLETVAAVPGMVGGMLLHL. Residues E162, E201, and H204 each contribute to the Fe cation site. A helical membrane pass occupies residues 220–240; the sequence is LLVLAVQGVFFNAFFVLYILS. Fe cation is bound by residues E252, E303, and H306.

The protein belongs to the alternative oxidase family. Homodimer; disulfide-linked. It depends on Fe cation as a cofactor.

The protein resides in the mitochondrion inner membrane. The catalysed reaction is 2 a ubiquinol + O2 = 2 a ubiquinone + 2 H2O. Its function is as follows. Catalyzes the cyanide-resistant oxidation of ubiquinol and the reduction of molecular oxygen to water, but does not translocate protons and consequently is not linked to oxidative phosphorylation. May increase respiration when the cytochrome respiratory pathway is restricted, or in response to low temperatures. This chain is Ubiquinol oxidase 2, mitochondrial (AOX2), found in Glycine max (Soybean).